The sequence spans 238 residues: Flagellar L-ring protein (238 aa).

A signal peptide spans 1–16 (MNKAILAVAMVLLLAG). The N-palmitoyl cysteine moiety is linked to residue Cys17. Cys17 is lipidated: S-diacylglycerol cysteine.

This sequence belongs to the FlgH family. As to quaternary structure, the basal body constitutes a major portion of the flagellar organelle and consists of four rings (L,P,S, and M) mounted on a central rod.

It is found in the cell outer membrane. It localises to the bacterial flagellum basal body. Assembles around the rod to form the L-ring and probably protects the motor/basal body from shearing forces during rotation. This is Flagellar L-ring protein from Brucella canis (strain ATCC 23365 / NCTC 10854 / RM-666).